A 313-amino-acid chain; its full sequence is Ubiquinone biosynthesis protein COQ4, mitochondrial (313 aa).

Residues H197, D198, H201, and E213 each contribute to the Zn(2+) site. The tract at residues 290–313 (QPPDLRELRRKQKKLPEPERENAN) is disordered. Over residues 303–313 (KLPEPERENAN) the composition is skewed to basic and acidic residues.

It belongs to the COQ4 family. As to quaternary structure, component of a multi-subunit COQ enzyme complex, composed of at least COQ3, COQ4, COQ5, COQ6, COQ7 and COQ9. Zn(2+) is required as a cofactor.

Its subcellular location is the mitochondrion inner membrane. It carries out the reaction a 4-hydroxy-3-methoxy-5-(all-trans-polyprenyl)benzoate + H(+) = a 2-methoxy-6-(all-trans-polyprenyl)phenol + CO2. It participates in cofactor biosynthesis; ubiquinone biosynthesis. Functionally, lyase that catalyzes the C1-decarboxylation of 4-hydroxy-3-methoxy-5-(all-trans-polyprenyl)benzoic acid into 2-methoxy-6-(all-trans-polyprenyl)phenol during ubiquinone biosynthesis. In Meyerozyma guilliermondii (strain ATCC 6260 / CBS 566 / DSM 6381 / JCM 1539 / NBRC 10279 / NRRL Y-324) (Yeast), this protein is Ubiquinone biosynthesis protein COQ4, mitochondrial.